Here is a 656-residue protein sequence, read N- to C-terminus: UvrABC system protein B (656 aa).

Residues Gln24–Arg409 form the Helicase ATP-binding domain. An ATP-binding site is contributed by Gly37–Thr44. The Beta-hairpin motif lies at Tyr90–Ile113. Residues Gln426–Ile589 form the Helicase C-terminal domain. Positions Glu616 to Gln651 constitute a UVR domain.

The protein belongs to the UvrB family. Forms a heterotetramer with UvrA during the search for lesions. Interacts with UvrC in an incision complex.

It localises to the cytoplasm. In terms of biological role, the UvrABC repair system catalyzes the recognition and processing of DNA lesions. A damage recognition complex composed of 2 UvrA and 2 UvrB subunits scans DNA for abnormalities. Upon binding of the UvrA(2)B(2) complex to a putative damaged site, the DNA wraps around one UvrB monomer. DNA wrap is dependent on ATP binding by UvrB and probably causes local melting of the DNA helix, facilitating insertion of UvrB beta-hairpin between the DNA strands. Then UvrB probes one DNA strand for the presence of a lesion. If a lesion is found the UvrA subunits dissociate and the UvrB-DNA preincision complex is formed. This complex is subsequently bound by UvrC and the second UvrB is released. If no lesion is found, the DNA wraps around the other UvrB subunit that will check the other stand for damage. The protein is UvrABC system protein B of Chlamydia abortus (strain DSM 27085 / S26/3) (Chlamydophila abortus).